The chain runs to 295 residues: Mediator of RNA polymerase II transcription subunit 6 (295 aa).

Positions 211 to 243 (TATAATNGNNAGGGSNKSSVRPTGGANMATVPS) are disordered. At Ser225 the chain carries Phosphoserine.

It belongs to the Mediator complex subunit 6 family. In terms of assembly, component of the Mediator complex, which is composed of at least 21 subunits that form three structurally distinct submodules. The Mediator head module contains MED6, MED8, MED11, SRB4/MED17, SRB5/MED18, ROX3/MED19, SRB2/MED20 and SRB6/MED22, the middle module contains MED1, MED4, NUT1/MED5, MED7, CSE2/MED9, NUT2/MED10, SRB7/MED21 and SOH1/MED31, and the tail module contains MED2, PGD1/MED3, RGR1/MED14, GAL11/MED15 and SIN4/MED16. The head and the middle modules interact directly with RNA polymerase II, whereas the elongated tail module interacts with gene-specific regulatory proteins. MED6 interacts directly with SRB4/MED17 and SRB7/MED21.

The protein localises to the nucleus. Its function is as follows. Component of the Mediator complex, a coactivator involved in the regulated transcription of nearly all RNA polymerase II-dependent genes. Mediator functions as a bridge to convey information from gene-specific regulatory proteins to the basal RNA polymerase II transcription machinery. The Mediator complex, having a compact conformation in its free form, is recruited to promoters by direct interactions with regulatory proteins and serves for the assembly of a functional preinitiation complex with RNA polymerase II and the general transcription factors. The Mediator complex unfolds to an extended conformation and partially surrounds RNA polymerase II, specifically interacting with the unphosphorylated form of the C-terminal domain (CTD) of RNA polymerase II. The Mediator complex dissociates from the RNA polymerase II holoenzyme and stays at the promoter when transcriptional elongation begins. In Saccharomyces cerevisiae (strain ATCC 204508 / S288c) (Baker's yeast), this protein is Mediator of RNA polymerase II transcription subunit 6 (MED6).